The primary structure comprises 182 residues: ATP-dependent protease subunit HslV (182 aa).

The active site involves threonine 12. Alanine 167, cysteine 170, and threonine 173 together coordinate Na(+).

This sequence belongs to the peptidase T1B family. HslV subfamily. A double ring-shaped homohexamer of HslV is capped on each side by a ring-shaped HslU homohexamer. The assembly of the HslU/HslV complex is dependent on binding of ATP.

It is found in the cytoplasm. It catalyses the reaction ATP-dependent cleavage of peptide bonds with broad specificity.. Its activity is regulated as follows. Allosterically activated by HslU binding. Functionally, protease subunit of a proteasome-like degradation complex believed to be a general protein degrading machinery. This Pelodictyon phaeoclathratiforme (strain DSM 5477 / BU-1) protein is ATP-dependent protease subunit HslV.